Consider the following 926-residue polypeptide: LPS-assembly protein LptD (926 aa).

The signal sequence occupies residues 1–22; it reads MALKSPAFRKKFPLLVTGSLLA. Positions 55 to 91 are disordered; sequence AAAVDLPPRPVHDTTSVSSNGTVTSQGTSSGEQSAGT. Residues 68 to 91 show a composition bias toward low complexity; sequence TTSVSSNGTVTSQGTSSGEQSAGT.

This sequence belongs to the LptD family. As to quaternary structure, component of the lipopolysaccharide transport and assembly complex. Interacts with LptE and LptA.

The protein resides in the cell outer membrane. Its function is as follows. Together with LptE, is involved in the assembly of lipopolysaccharide (LPS) at the surface of the outer membrane. This chain is LPS-assembly protein LptD, found in Pseudomonas syringae pv. syringae (strain B728a).